The chain runs to 178 residues: MSRIGRLPIPVPSGVDITVEGATVTVKGPKGTLSHVVVEPIAVNREEGQLVVTRPDDERRSRSLHGLTRTLVSNMVTGVTAGYSKTLEIVGVGYRVQAKGSDLEFALGYSHPVPVKAPEGIRFEVQTPTRFVVHGIDKQLVGEVSAKIRGLRKPDPYKGKGVRYQGEVVRRKVGKTGK.

This sequence belongs to the universal ribosomal protein uL6 family. In terms of assembly, part of the 50S ribosomal subunit.

This protein binds to the 23S rRNA, and is important in its secondary structure. It is located near the subunit interface in the base of the L7/L12 stalk, and near the tRNA binding site of the peptidyltransferase center. This is Large ribosomal subunit protein uL6 from Frankia alni (strain DSM 45986 / CECT 9034 / ACN14a).